The following is a 483-amino-acid chain: Cobyric acid synthase (483 aa).

The GATase cobBQ-type domain maps to 251 to 438; the sequence is ALIVAVPMLP…LHGVFSADRF (188 aa). Cys333 acts as the Nucleophile in catalysis. Residue His430 is part of the active site.

The protein belongs to the CobB/CobQ family. CobQ subfamily.

The protein operates within cofactor biosynthesis; adenosylcobalamin biosynthesis. Catalyzes amidations at positions B, D, E, and G on adenosylcobyrinic A,C-diamide. NH(2) groups are provided by glutamine, and one molecule of ATP is hydrogenolyzed for each amidation. The chain is Cobyric acid synthase from Brucella canis (strain ATCC 23365 / NCTC 10854 / RM-666).